A 706-amino-acid polypeptide reads, in one-letter code: Phenylalanine--tRNA ligase beta subunit, chloroplastic (706 aa).

Residues lysine 300–threonine 388 enclose the B5 domain. The Mg(2+) site is built by aspartate 366, aspartate 372, glutamate 375, and glutamate 376. Residues serine 612 to arginine 705 enclose the FDX-ACB domain.

The protein belongs to the phenylalanyl-tRNA synthetase beta subunit family. Type 1 subfamily. In terms of assembly, tetramer of two alpha and two beta subunits. It depends on Mg(2+) as a cofactor.

Its subcellular location is the plastid. It localises to the chloroplast. The enzyme catalyses tRNA(Phe) + L-phenylalanine + ATP = L-phenylalanyl-tRNA(Phe) + AMP + diphosphate + H(+). The sequence is that of Phenylalanine--tRNA ligase beta subunit, chloroplastic from Phaeodactylum tricornutum (strain CCAP 1055/1).